The primary structure comprises 412 residues: Subtilisin-like protease 6 (412 aa).

An N-terminal signal peptide occupies residues 1–20 (MGFITKAIPIVLAALSTVNG). The propeptide occupies 21 to 127 (ARILEAGPHA…VRTTTNGTNL (107 aa)). Residues 36-120 (KYIVVMKKDV…FIEPDFVVRT (85 aa)) form the Inhibitor I9 domain. One can recognise a Peptidase S8 domain in the interval 135–412 (SWGLARVGSK…SKLIYNGSGK (278 aa)). Active-site charge relay system residues include D167 and H198. 2 N-linked (GlcNAc...) asparagine glycosylation sites follow: N252 and N264. S358 (charge relay system) is an active-site residue. Residue N408 is glycosylated (N-linked (GlcNAc...) asparagine).

It belongs to the peptidase S8 family.

It localises to the secreted. Its function is as follows. Secreted subtilisin-like serine protease with keratinolytic activity that contributes to pathogenicity. The sequence is that of Subtilisin-like protease 6 (SUB6) from Arthroderma benhamiae (strain ATCC MYA-4681 / CBS 112371) (Trichophyton mentagrophytes).